The sequence spans 247 residues: tRNA pseudouridine synthase A (247 aa).

The Nucleophile role is filled by D52. Y110 contributes to the substrate binding site.

Belongs to the tRNA pseudouridine synthase TruA family. As to quaternary structure, homodimer.

The catalysed reaction is uridine(38/39/40) in tRNA = pseudouridine(38/39/40) in tRNA. Formation of pseudouridine at positions 38, 39 and 40 in the anticodon stem and loop of transfer RNAs. The polypeptide is tRNA pseudouridine synthase A (Hyphomonas neptunium (strain ATCC 15444)).